The sequence spans 424 residues: N-succinylarginine dihydrolase (424 aa).

Residues 19 to 28 (AGLSPGNIAS), Asn110, and 137 to 138 (HR) contribute to the substrate site. Residue Glu174 is part of the active site. A substrate-binding site is contributed by Arg207. The active site involves His240. Substrate is bound by residues Asp242 and Asn349. Cys355 acts as the Nucleophile in catalysis.

It belongs to the succinylarginine dihydrolase family. In terms of assembly, homodimer.

The catalysed reaction is N(2)-succinyl-L-arginine + 2 H2O + 2 H(+) = N(2)-succinyl-L-ornithine + 2 NH4(+) + CO2. The protein operates within amino-acid degradation; L-arginine degradation via AST pathway; L-glutamate and succinate from L-arginine: step 2/5. Catalyzes the hydrolysis of N(2)-succinylarginine into N(2)-succinylornithine, ammonia and CO(2). The protein is N-succinylarginine dihydrolase of Rhizorhabdus wittichii (strain DSM 6014 / CCUG 31198 / JCM 15750 / NBRC 105917 / EY 4224 / RW1) (Sphingomonas wittichii).